Consider the following 369-residue polypeptide: Chaperone protein DnaJ (369 aa).

The J domain occupies 7 to 73 (DYYEILGVPR…QKRAMYDRFG (67 aa)). The CR-type zinc finger occupies 143-225 (GAEIPVEYER…CGGSGRVLRK (83 aa)). 8 residues coordinate Zn(2+): Cys-156, Cys-159, Cys-173, Cys-176, Cys-199, Cys-202, Cys-213, and Cys-216. 4 CXXCXGXG motif repeats span residues 156-163 (CPRCGGTG), 173-180 (CPSCGGTG), 199-206 (CERCGGTG), and 213-220 (CHECGGSG).

Belongs to the DnaJ family. As to quaternary structure, homodimer. Zn(2+) serves as cofactor.

It is found in the cytoplasm. Its function is as follows. Participates actively in the response to hyperosmotic and heat shock by preventing the aggregation of stress-denatured proteins and by disaggregating proteins, also in an autonomous, DnaK-independent fashion. Unfolded proteins bind initially to DnaJ; upon interaction with the DnaJ-bound protein, DnaK hydrolyzes its bound ATP, resulting in the formation of a stable complex. GrpE releases ADP from DnaK; ATP binding to DnaK triggers the release of the substrate protein, thus completing the reaction cycle. Several rounds of ATP-dependent interactions between DnaJ, DnaK and GrpE are required for fully efficient folding. Also involved, together with DnaK and GrpE, in the DNA replication of plasmids through activation of initiation proteins. The protein is Chaperone protein DnaJ of Thermotoga sp. (strain RQ2).